Reading from the N-terminus, the 70-residue chain is U2-agatoxin-Ao1d (70 aa).

An N-terminal signal peptide occupies residues 1 to 20; sequence MRAIIYLLLISAMVFSMTKA. Residues 21–34 constitute a propeptide that is removed on maturation; the sequence is VPEEEGLQLSEDER. Intrachain disulfides connect Cys37–Cys53, Cys44–Cys58, and Cys52–Cys68. A Leucine amide modification is found at Leu69.

The protein belongs to the neurotoxin 01 (U2-agtx) family. As to expression, expressed by the venom gland.

It is found in the secreted. Its function is as follows. Insect active toxin causing rapid but reversible paralysis in crickets. No activity shown in mammals. Does not show effect on mammalian voltage-gated calcium channels. This is U2-agatoxin-Ao1d from Agelena orientalis (Funnel-web spider).